A 188-amino-acid polypeptide reads, in one-letter code: Elongation factor P (188 aa).

The protein belongs to the elongation factor P family.

The protein resides in the cytoplasm. The protein operates within protein biosynthesis; polypeptide chain elongation. Involved in peptide bond synthesis. Stimulates efficient translation and peptide-bond synthesis on native or reconstituted 70S ribosomes in vitro. Probably functions indirectly by altering the affinity of the ribosome for aminoacyl-tRNA, thus increasing their reactivity as acceptors for peptidyl transferase. In Bacteroides fragilis (strain ATCC 25285 / DSM 2151 / CCUG 4856 / JCM 11019 / LMG 10263 / NCTC 9343 / Onslow / VPI 2553 / EN-2), this protein is Elongation factor P.